We begin with the raw amino-acid sequence, 397 residues long: Acetate kinase 2 (397 aa).

Asn10 contacts Mg(2+). Lys17 lines the ATP pocket. Residue Arg90 coordinates substrate. Asp147 acts as the Proton donor/acceptor in catalysis. Residues 207-211, 281-283, and 329-333 each bind ATP; these read HLGNG, DAR, and GIGEN. Glu385 contributes to the Mg(2+) binding site.

Belongs to the acetokinase family. As to quaternary structure, homodimer. Mg(2+) serves as cofactor. The cofactor is Mn(2+).

The protein resides in the cytoplasm. The catalysed reaction is acetate + ATP = acetyl phosphate + ADP. It functions in the pathway metabolic intermediate biosynthesis; acetyl-CoA biosynthesis; acetyl-CoA from acetate: step 1/2. Its function is as follows. Catalyzes the formation of acetyl phosphate from acetate and ATP. Can also catalyze the reverse reaction. The protein is Acetate kinase 2 of Vibrio cholerae serotype O1 (strain ATCC 39315 / El Tor Inaba N16961).